A 155-amino-acid chain; its full sequence is Transcriptional repressor NrdR (155 aa).

The segment at 3–34 is a zinc-finger region; the sequence is CPKCDHNGTRVLDSRPVQDHYSIRRRRECEKC. An ATP-cone domain is found at 49–139; sequence LIIVKKDGNR…VYRQFKDITV (91 aa).

This sequence belongs to the NrdR family. Requires Zn(2+) as cofactor.

Negatively regulates transcription of bacterial ribonucleotide reductase nrd genes and operons by binding to NrdR-boxes. This Exiguobacterium sp. (strain ATCC BAA-1283 / AT1b) protein is Transcriptional repressor NrdR.